The following is a 118-amino-acid chain: Large ribosomal subunit protein bL20 (118 aa).

The protein belongs to the bacterial ribosomal protein bL20 family.

Binds directly to 23S ribosomal RNA and is necessary for the in vitro assembly process of the 50S ribosomal subunit. It is not involved in the protein synthesizing functions of that subunit. The polypeptide is Large ribosomal subunit protein bL20 (rplT) (Aquifex aeolicus (strain VF5)).